A 442-amino-acid polypeptide reads, in one-letter code: DDB1- and CUL4-associated factor 12-B (442 aa).

The span at 1–13 (MTRRPVSRKRRAT) shows a compositional bias: basic residues. The disordered stretch occupies residues 1-31 (MTRRPVSRKRRATHGTGPGEQSDWDHSAHKR). 4 WD repeats span residues 132 to 173 (SHQS…PVCV), 177 to 215 (GHNDWIFSIAWISDTMAVSGSRDGFMALWEMTDEVVNKR), 245 to 284 (PVNCKVRALAFNGNNKELGAVSLDGFFHLWKAEQTLSKLL), and 333 to 370 (EQGSGIRSVSFYEHIVTVGTGQGALLFYDIRAQRFLED).

This sequence belongs to the WD repeat DCAF12 family. Component of the DCX(DCAF12) E3 ubiquitin ligase complex, at least composed of cul4 (cul4a or cul4b), ddb1, dcaf12 and rbx1.

The protein localises to the cytoplasm. It is found in the cytoskeleton. Its subcellular location is the microtubule organizing center. The protein resides in the centrosome. It localises to the nucleus. Its pathway is protein modification; protein ubiquitination. Its function is as follows. Substrate-recognition component of a DCX (DDB1-CUL4-X-box) E3 ubiquitin-protein ligase complex of the DesCEND (destruction via C-end degrons) pathway, which recognizes a C-degron located at the extreme C terminus of target proteins, leading to their ubiquitination and degradation. The C-degron recognized by the DesCEND pathway is usually a motif of less than ten residues and can be present in full-length proteins, truncated proteins or proteolytically cleaved forms. The DCX(DCAF12) complex specifically recognizes proteins with a diglutamate (Glu-Glu) at the C-terminus leading to their ubiquitination and degradation. Also directly recognizes the C-terminal glutamate-leucine (Glu-Leu) degron as an alternative degron in proteins leading to their ubiquitination and degradation. The sequence is that of DDB1- and CUL4-associated factor 12-B (dcaf12-b) from Xenopus laevis (African clawed frog).